The following is a 795-amino-acid chain: Phenylalanine--tRNA ligase beta subunit (795 aa).

The tRNA-binding domain maps to 39–148 (AGTFNGVVVG…LDAPIGTDLR (110 aa)). A B5 domain is found at 401–476 (PKVNTVQLRR…RIYGYNSIPN (76 aa)). Residues Asp-454, Asp-460, Glu-463, and Glu-464 each contribute to the Mg(2+) site. The FDX-ACB domain occupies 701-794 (SKFPANRRDL…VKQRFNAELR (94 aa)).

It belongs to the phenylalanyl-tRNA synthetase beta subunit family. Type 1 subfamily. In terms of assembly, tetramer of two alpha and two beta subunits. Mg(2+) is required as a cofactor.

The protein localises to the cytoplasm. The catalysed reaction is tRNA(Phe) + L-phenylalanine + ATP = L-phenylalanyl-tRNA(Phe) + AMP + diphosphate + H(+). The protein is Phenylalanine--tRNA ligase beta subunit of Haemophilus influenzae (strain 86-028NP).